The chain runs to 81 residues: MPLSDWCCGICEEAPLGRAYTQTWMETGCGPHGVTALGQQELKDCLRARSGGTASSVDWIMEAARGSLNVHNCLIKFGRRD.

3 disulfide bridges follow: cysteine 7/cysteine 73, cysteine 8/cysteine 29, and cysteine 11/cysteine 45.

In terms of tissue distribution, expressed in placenta, heart, lung, liver, pancreas, skeletal muscle and brain.

The protein localises to the cytoplasm. This chain is Putative chemokine-related protein B42, found in Homo sapiens (Human).